Reading from the N-terminus, the 138-residue chain is Flavodoxin (138 aa).

Residues 1 to 136 (MKIVYWSGTG…DCIEFGKKIA (136 aa)) enclose the Flavodoxin-like domain.

The protein belongs to the flavodoxin family. It depends on FMN as a cofactor.

Functionally, low-potential electron donor to a number of redox enzymes. The polypeptide is Flavodoxin (Clostridium beijerinckii (Clostridium MP)).